A 310-amino-acid polypeptide reads, in one-letter code: Olfactory receptor 5AR1 (310 aa).

The Extracellular portion of the chain corresponds to 1–28; that stretch reads MDKENSSMVTEFIFMGITQDPQMEIIFF. The N-linked (GlcNAc...) asparagine glycan is linked to Asn-5. The helical transmembrane segment at 29–49 threads the bilayer; it reads VVFLIVYLVNVVGNIGMIILI. At 50–58 the chain is on the cytoplasmic side; sequence TTDTQLHTP. Residues 59 to 79 traverse the membrane as a helical segment; it reads MYFFLCNLSFVDLGYSSAIAP. The Extracellular portion of the chain corresponds to 80–100; it reads RMLADFLTNHKVISFSSCATQ. A disulfide bridge connects residues Cys-97 and Cys-189. The helical transmembrane segment at 101 to 120 threads the bilayer; that stretch reads FAFFVGFVDAECYVLAAMAY. The Cytoplasmic portion of the chain corresponds to 121-139; the sequence is GRFVAICRPLHYSTFMSKQ. A helical transmembrane segment spans residues 140–160; sequence VCLALMLGSYLAGLVSLVAHT. Residues 161 to 205 are Extracellular-facing; sequence TLTFSLSYCGSNIINHFFCEIPPLLALSCSDTYISEILLFSLCGF. The helical transmembrane segment at 206–226 threads the bilayer; it reads IEFSTILIIFISYTFILVAII. The Cytoplasmic segment spans residues 227–239; the sequence is RMRSAEGRLKAFS. Residues 240-260 traverse the membrane as a helical segment; sequence TCGSHLTGITLFYGTVMFMYL. The Extracellular segment spans residues 261–271; that stretch reads RPTSSYSLDQD. The chain crosses the membrane as a helical span at residues 272-292; it reads KWASVFYTVIIPMLNPLIYSL. The Cytoplasmic segment spans residues 293-310; the sequence is RNKDVKAAFKKLIGKKSQ.

It belongs to the G-protein coupled receptor 1 family.

The protein localises to the cell membrane. Its function is as follows. Odorant receptor. This is Olfactory receptor 5AR1 from Homo sapiens (Human).